The primary structure comprises 190 residues: Pyridoxal 5'-phosphate synthase subunit PdxT (190 aa).

46-48 (GES) lines the L-glutamine pocket. Cys78 (nucleophile) is an active-site residue. L-glutamine contacts are provided by residues Arg105 and 138-139 (IR). Active-site charge relay system residues include His174 and Glu176.

Belongs to the glutaminase PdxT/SNO family. In terms of assembly, in the presence of PdxS, forms a dodecamer of heterodimers. Only shows activity in the heterodimer.

It carries out the reaction aldehydo-D-ribose 5-phosphate + D-glyceraldehyde 3-phosphate + L-glutamine = pyridoxal 5'-phosphate + L-glutamate + phosphate + 3 H2O + H(+). The enzyme catalyses L-glutamine + H2O = L-glutamate + NH4(+). Its pathway is cofactor biosynthesis; pyridoxal 5'-phosphate biosynthesis. In terms of biological role, catalyzes the hydrolysis of glutamine to glutamate and ammonia as part of the biosynthesis of pyridoxal 5'-phosphate. The resulting ammonia molecule is channeled to the active site of PdxS. The protein is Pyridoxal 5'-phosphate synthase subunit PdxT of Bifidobacterium longum (strain NCC 2705).